Reading from the N-terminus, the 61-residue chain is Small ribosomal subunit protein uS14 (61 aa).

4 residues coordinate Zn(2+): cysteine 24, cysteine 27, cysteine 40, and cysteine 43.

This sequence belongs to the universal ribosomal protein uS14 family. Zinc-binding uS14 subfamily. In terms of assembly, part of the 30S ribosomal subunit. Contacts proteins S3 and S10. Requires Zn(2+) as cofactor.

In terms of biological role, binds 16S rRNA, required for the assembly of 30S particles and may also be responsible for determining the conformation of the 16S rRNA at the A site. The chain is Small ribosomal subunit protein uS14 from Borreliella afzelii (strain PKo) (Borrelia afzelii).